Here is a 364-residue protein sequence, read N- to C-terminus: Probable dual-specificity RNA methyltransferase RlmN (364 aa).

E107 functions as the Proton acceptor in the catalytic mechanism. Positions 113 to 346 (HDYGNSVCVT…ATIRREQGSD (234 aa)) constitute a Radical SAM core domain. The cysteines at positions 120 and 351 are disulfide-linked. 3 residues coordinate [4Fe-4S] cluster: C127, C131, and C134. Residues 177-178 (GE), S209, 232-234 (SLH), and N308 contribute to the S-adenosyl-L-methionine site. C351 serves as the catalytic S-methylcysteine intermediate.

The protein belongs to the radical SAM superfamily. RlmN family. It depends on [4Fe-4S] cluster as a cofactor.

Its subcellular location is the cytoplasm. It carries out the reaction adenosine(2503) in 23S rRNA + 2 reduced [2Fe-2S]-[ferredoxin] + 2 S-adenosyl-L-methionine = 2-methyladenosine(2503) in 23S rRNA + 5'-deoxyadenosine + L-methionine + 2 oxidized [2Fe-2S]-[ferredoxin] + S-adenosyl-L-homocysteine. It catalyses the reaction adenosine(37) in tRNA + 2 reduced [2Fe-2S]-[ferredoxin] + 2 S-adenosyl-L-methionine = 2-methyladenosine(37) in tRNA + 5'-deoxyadenosine + L-methionine + 2 oxidized [2Fe-2S]-[ferredoxin] + S-adenosyl-L-homocysteine. Specifically methylates position 2 of adenine 2503 in 23S rRNA and position 2 of adenine 37 in tRNAs. Confers resistance to some classes of antibiotics. The protein is Probable dual-specificity RNA methyltransferase RlmN of Staphylococcus haemolyticus (strain JCSC1435).